A 237-amino-acid chain; its full sequence is MTKLSVNINKIATLRNARGGDVPNVLEAAKNIESFGAEGITVHPRPDERHIRYADARELKPVLNTEFNIEGKPIQQFIDLVLEVKPAQVTLVPDAENAITSDSGWDTVKHRDYLKEVIAEFKANGIRTSIFVDPVKKMIEGAAETGSDRIELYTESFAVDFEKGNSNAVKPYAECAKIAHELGLGINAGHDLSLKNINYFKENVPYLDEVSIGHALISEALYLGLEKTIQQYLKLLK.

Asn7 and Arg18 together coordinate 3-amino-2-oxopropyl phosphate. The active-site Proton acceptor is the His43. 1-deoxy-D-xylulose 5-phosphate-binding residues include Arg45 and His50. Glu70 acts as the Proton acceptor in catalysis. Thr100 lines the 1-deoxy-D-xylulose 5-phosphate pocket. Residue His190 is the Proton donor of the active site. 3-amino-2-oxopropyl phosphate is bound by residues Asp191 and 213–214 (GH).

Belongs to the PNP synthase family. Homooctamer; tetramer of dimers.

Its subcellular location is the cytoplasm. It carries out the reaction 3-amino-2-oxopropyl phosphate + 1-deoxy-D-xylulose 5-phosphate = pyridoxine 5'-phosphate + phosphate + 2 H2O + H(+). It participates in cofactor biosynthesis; pyridoxine 5'-phosphate biosynthesis; pyridoxine 5'-phosphate from D-erythrose 4-phosphate: step 5/5. Its function is as follows. Catalyzes the complicated ring closure reaction between the two acyclic compounds 1-deoxy-D-xylulose-5-phosphate (DXP) and 3-amino-2-oxopropyl phosphate (1-amino-acetone-3-phosphate or AAP) to form pyridoxine 5'-phosphate (PNP) and inorganic phosphate. This chain is Pyridoxine 5'-phosphate synthase, found in Christiangramia forsetii (strain DSM 17595 / CGMCC 1.15422 / KT0803) (Gramella forsetii).